Consider the following 362-residue polypeptide: Cytoskeleton protein RodZ (362 aa).

The Cytoplasmic portion of the chain corresponds to 1-111; that stretch reads MNTEASQDQT…LGKKHKKRDG (111 aa). Positions 19 to 79 constitute an HTH cro/C1-type domain; it reads LRQARESLGL…KLVHLPEDEL (61 aa). A DNA-binding region (H-T-H motif) is located at residues 30-49; sequence QQTVAERLCLKVSTIRDIEE. The chain crosses the membrane as a helical; Signal-anchor for type II membrane protein span at residues 112 to 132; sequence WLMSFTWLIVLVVLGLTGAWW. Over 133-362 the chain is Periplasmic; sequence WQNHQAQQAE…RVARLTVGVE (230 aa). The disordered stretch occupies residues 151 to 277; it reads SAQLSQNGGQ…LPTADAGVSG (127 aa). Positions 193-221 are enriched in low complexity; it reads STSAVTNSATTSSATTSSVPTTSSVPKTT. The span at 223–242 shows a compositional bias: polar residues; sequence VPKTNSTEPVDTANTNTTMH. Positions 246-259 are enriched in low complexity; sequence AASAAVSPSQVPQP.

The protein belongs to the RodZ family.

Its subcellular location is the cell inner membrane. Functionally, cytoskeletal protein that is involved in cell-shape control through regulation of the length of the long axis. This Yersinia pseudotuberculosis serotype IB (strain PB1/+) protein is Cytoskeleton protein RodZ.